We begin with the raw amino-acid sequence, 630 residues long: Protein mono-ADP-ribosyltransferase PARP6 (630 aa).

C237 is subject to ADP-ribosylcysteine. Residues 394 to 620 form the PARP catalytic domain; that stretch reads EMTQGSYLEI…QDPKIQKEIM (227 aa). The residue at position 600 (D600) is an ADP-ribosyl aspartic acid.

The protein belongs to the ARTD/PARP family. Post-translationally, auto-mono-ADP-ribosylated.

It carries out the reaction L-aspartyl-[protein] + NAD(+) = 4-O-(ADP-D-ribosyl)-L-aspartyl-[protein] + nicotinamide. The catalysed reaction is L-cysteinyl-[protein] + NAD(+) = S-(ADP-D-ribosyl)-L-cysteinyl-[protein] + nicotinamide + H(+). Functionally, mono-ADP-ribosyltransferase that mediates mono-ADP-ribosylation of target proteins. In Mus musculus (Mouse), this protein is Protein mono-ADP-ribosyltransferase PARP6.